Here is a 259-residue protein sequence, read N- to C-terminus: Putative aldolase class 2 protein PA3430 (259 aa).

Residues His-113, His-115, and His-176 each contribute to the Zn(2+) site.

The protein belongs to the aldolase class II family. Requires Zn(2+) as cofactor.

The protein is Putative aldolase class 2 protein PA3430 of Pseudomonas aeruginosa (strain ATCC 15692 / DSM 22644 / CIP 104116 / JCM 14847 / LMG 12228 / 1C / PRS 101 / PAO1).